The primary structure comprises 382 residues: Kelch domain-containing protein 3 (382 aa).

Kelch repeat units follow at residues 25-77 (RVYS…PYMR), 88-138 (TVLL…VLGK), 139-189 (IMYI…TMLG), 191-249 (HMYV…GYNG), and 251-301 (LYIF…IVGD).

As to quaternary structure, component of a CRL2(KLHDC3) complex, also named ECS(KLHDC3) complex, composed of CUL2, Elongin BC (ELOB and ELOC), RBX1 and substrate-specific adapter KLHDC3. May form oligomers as a KLHDC3-ELOB-ELOC complex; this interaction is likely autoinhibitory for the E3 ligase complex.

It is found in the cytoplasm. The protein operates within protein modification; protein ubiquitination. In terms of biological role, substrate-recognition component of a Cul2-RING (CRL2) E3 ubiquitin-protein ligase complex of the DesCEND (destruction via C-end degrons) pathway, which recognizes a C-degron located at the extreme C terminus of target proteins, leading to their ubiquitination and degradation. The C-degron recognized by the DesCEND pathway is usually a motif of less than ten residues and can be present in full-length proteins, truncated proteins or proteolytically cleaved forms. The CRL2(KLHDC3) complex specifically recognizes proteins with a glycine (Gly) at the C-terminus, leading to their ubiquitination and degradation: recognizes the C-terminal -Arg-(Xaa)n-Arg-Gly, -Arg-(Xaa)n-Lys-Gly, and -Arg-(Xaa)n-Gln-Gly degrons. The CRL2(KLHDC3) complex mediates ubiquitination and degradation of truncated SELENOV and SEPHS2 selenoproteins produced by failed UGA/Sec decoding, which end with a glycine. May be involved in meiotic recombination process. This is Kelch domain-containing protein 3 from Homo sapiens (Human).